We begin with the raw amino-acid sequence, 426 residues long: Histidine--tRNA ligase (426 aa).

The protein belongs to the class-II aminoacyl-tRNA synthetase family. In terms of assembly, homodimer.

It is found in the cytoplasm. It carries out the reaction tRNA(His) + L-histidine + ATP = L-histidyl-tRNA(His) + AMP + diphosphate + H(+). The sequence is that of Histidine--tRNA ligase from Streptococcus pyogenes serotype M5 (strain Manfredo).